Reading from the N-terminus, the 379-residue chain is DNA (cytosine-5)-methyltransferase (379 aa).

In terms of domain architecture, SAM-dependent MTase C5-type spans 4–366 (LRVLEFYSGI…KVLVSPNEEE (363 aa)). Cys78 is an active-site residue. The segment covering 178–192 (KKEQDKHNEKVDENK) has biased composition (basic and acidic residues). A disordered region spans residues 178–205 (KKEQDKHNEKVDENKLNNNSNNNNEQNK). Residues 193 to 203 (LNNNSNNNNEQ) show a composition bias toward low complexity.

Belongs to the class I-like SAM-binding methyltransferase superfamily. C5-methyltransferase family.

Its subcellular location is the nucleus. The catalysed reaction is a 2'-deoxycytidine in DNA + S-adenosyl-L-methionine = a 5-methyl-2'-deoxycytidine in DNA + S-adenosyl-L-homocysteine + H(+). Functionally, involved in epigenetic gene silencing. Methylates specific cytosine residues in the retrotransposons DIRS-1 and Skipper. The sequence is that of DNA (cytosine-5)-methyltransferase (dnmA) from Dictyostelium discoideum (Social amoeba).